A 93-amino-acid polypeptide reads, in one-letter code: UPF0521 protein B (93 aa).

Positions 2–58 (SLKEVITSLKNDFHSINKEIDSMKENNEKQEEKIFQEIKKLKLEMELLRKDNLSFKT) form a coiled coil.

The protein belongs to the UPF0521 family.

This chain is UPF0521 protein B, found in Dictyostelium discoideum (Social amoeba).